The chain runs to 123 residues: Large ribosomal subunit protein uL18 (123 aa).

This sequence belongs to the universal ribosomal protein uL18 family. As to quaternary structure, part of the 50S ribosomal subunit; part of the 5S rRNA/L5/L18/L25 subcomplex. Contacts the 5S and 23S rRNAs.

Functionally, this is one of the proteins that bind and probably mediate the attachment of the 5S RNA into the large ribosomal subunit, where it forms part of the central protuberance. In Chlamydia trachomatis serovar L2 (strain ATCC VR-902B / DSM 19102 / 434/Bu), this protein is Large ribosomal subunit protein uL18.